The chain runs to 817 residues: Phospholipase D alpha 2 (817 aa).

Residues 1 to 130 (MAHLLLHGTL…LSGEAIERRL (130 aa)) enclose the C2 domain. Aspartate 192 is a Ca(2+) binding site. In terms of domain architecture, PLD phosphodiesterase 1 spans 333 to 372 (YMITHHQKTVIVDHDMPVPRGGGSRRIVSFVGGLDLCDGR). Active-site residues include histidine 338, lysine 340, and aspartate 345. Histidine 338 provides a ligand contact to a 1,2-diacyl-sn-glycero-3-phosphate. Ca(2+) is bound by residues histidine 378 and histidine 412. The a 1,2-diacyl-sn-glycero-3-phosphate site is built by glutamine 529 and histidine 668. In terms of domain architecture, PLD phosphodiesterase 2 spans 663–690 (FMIYVHSKMMIVDDEYIIVGSANINQRS). Residues histidine 668, lysine 670, and aspartate 675 contribute to the active site. Residue glutamate 730 participates in Ca(2+) binding.

Belongs to the phospholipase D family. C2-PLD subfamily. The cofactor is Ca(2+).

It carries out the reaction a 1,2-diacyl-sn-glycero-3-phosphocholine + H2O = a 1,2-diacyl-sn-glycero-3-phosphate + choline + H(+). Its function is as follows. Hydrolyzes glycerol-phospholipids at the terminal phosphodiesteric bond. Plays an important role in various cellular processes. This chain is Phospholipase D alpha 2 (PLD2), found in Oryza sativa subsp. japonica (Rice).